Reading from the N-terminus, the 442-residue chain is UDP-N-acetylmuramate--L-alanine ligase (442 aa).

G109–S115 provides a ligand contact to ATP.

Belongs to the MurCDEF family.

It is found in the cytoplasm. It carries out the reaction UDP-N-acetyl-alpha-D-muramate + L-alanine + ATP = UDP-N-acetyl-alpha-D-muramoyl-L-alanine + ADP + phosphate + H(+). It functions in the pathway cell wall biogenesis; peptidoglycan biosynthesis. Cell wall formation. The protein is UDP-N-acetylmuramate--L-alanine ligase of Streptococcus pyogenes serotype M28 (strain MGAS6180).